We begin with the raw amino-acid sequence, 152 residues long: Transcriptional regulator MraZ (152 aa).

SpoVT-AbrB domains are found at residues 5–52 (ASAI…PIQE) and 81–124 (AHEC…DEAA).

This sequence belongs to the MraZ family. Forms oligomers.

The protein resides in the cytoplasm. Its subcellular location is the nucleoid. The chain is Transcriptional regulator MraZ from Shewanella halifaxensis (strain HAW-EB4).